Here is a 356-residue protein sequence, read N- to C-terminus: Phosphoserine aminotransferase (356 aa).

Position 41 (R41) interacts with L-glutamate. Pyridoxal 5'-phosphate contacts are provided by residues 76-77 (AS), W102, T150, D169, and Q192. An N6-(pyridoxal phosphate)lysine modification is found at K193. 234-235 (NT) is a binding site for pyridoxal 5'-phosphate.

It belongs to the class-V pyridoxal-phosphate-dependent aminotransferase family. SerC subfamily. As to quaternary structure, homodimer. The cofactor is pyridoxal 5'-phosphate.

The protein resides in the cytoplasm. It catalyses the reaction O-phospho-L-serine + 2-oxoglutarate = 3-phosphooxypyruvate + L-glutamate. It carries out the reaction 4-(phosphooxy)-L-threonine + 2-oxoglutarate = (R)-3-hydroxy-2-oxo-4-phosphooxybutanoate + L-glutamate. It functions in the pathway amino-acid biosynthesis; L-serine biosynthesis; L-serine from 3-phospho-D-glycerate: step 2/3. It participates in cofactor biosynthesis; pyridoxine 5'-phosphate biosynthesis; pyridoxine 5'-phosphate from D-erythrose 4-phosphate: step 3/5. In terms of biological role, catalyzes the reversible conversion of 3-phosphohydroxypyruvate to phosphoserine and of 3-hydroxy-2-oxo-4-phosphonooxybutanoate to phosphohydroxythreonine. This Flavobacterium johnsoniae (strain ATCC 17061 / DSM 2064 / JCM 8514 / BCRC 14874 / CCUG 350202 / NBRC 14942 / NCIMB 11054 / UW101) (Cytophaga johnsonae) protein is Phosphoserine aminotransferase.